The primary structure comprises 275 residues: Large ribosomal subunit protein uL2 (275 aa).

The interval 221–275 (RGTAMNPIDHPHGGGEGKNFGKHPVSPWGVQSKGKKTRKNKRTEKYILYNRKYKK) is disordered. A compositionally biased stretch (basic residues) spans 253–262 (KGKKTRKNKR).

It belongs to the universal ribosomal protein uL2 family. Part of the 50S ribosomal subunit. Forms a bridge to the 30S subunit in the 70S ribosome.

In terms of biological role, one of the primary rRNA binding proteins. Required for association of the 30S and 50S subunits to form the 70S ribosome, for tRNA binding and peptide bond formation. It has been suggested to have peptidyltransferase activity; this is somewhat controversial. Makes several contacts with the 16S rRNA in the 70S ribosome. This Wigglesworthia glossinidia brevipalpis protein is Large ribosomal subunit protein uL2.